We begin with the raw amino-acid sequence, 240 residues long: Probable transcriptional regulatory protein SO_3401 (240 aa).

It belongs to the TACO1 family.

It localises to the cytoplasm. This is Probable transcriptional regulatory protein SO_3401 from Shewanella oneidensis (strain ATCC 700550 / JCM 31522 / CIP 106686 / LMG 19005 / NCIMB 14063 / MR-1).